The chain runs to 151 residues: NADPH-dependent 7-cyano-7-deazaguanine reductase (151 aa).

C51 acts as the Thioimide intermediate in catalysis. D58 (proton donor) is an active-site residue. Residues 73–75 (VES) and 92–93 (HE) contribute to the substrate site.

It belongs to the GTP cyclohydrolase I family. QueF type 1 subfamily.

The protein resides in the cytoplasm. It catalyses the reaction 7-aminomethyl-7-carbaguanine + 2 NADP(+) = 7-cyano-7-deazaguanine + 2 NADPH + 3 H(+). Its pathway is tRNA modification; tRNA-queuosine biosynthesis. Its function is as follows. Catalyzes the NADPH-dependent reduction of 7-cyano-7-deazaguanine (preQ0) to 7-aminomethyl-7-deazaguanine (preQ1). The chain is NADPH-dependent 7-cyano-7-deazaguanine reductase from Bacteroides fragilis (strain ATCC 25285 / DSM 2151 / CCUG 4856 / JCM 11019 / LMG 10263 / NCTC 9343 / Onslow / VPI 2553 / EN-2).